We begin with the raw amino-acid sequence, 75 residues long: Sec-independent protein translocase protein TatA (75 aa).

Residues 1-21 (MGGFSIWHWLIVLVIVLLVFG) form a helical membrane-spanning segment. Residues 41–75 (KGMHDDDKPAGKLGDDSRTAEQAREAQAERDRDAR) are disordered.

It belongs to the TatA/E family. As to quaternary structure, the Tat system comprises two distinct complexes: a TatABC complex, containing multiple copies of TatA, TatB and TatC subunits, and a separate TatA complex, containing only TatA subunits. Substrates initially bind to the TatABC complex, which probably triggers association of the separate TatA complex to form the active translocon.

It localises to the cell inner membrane. Functionally, part of the twin-arginine translocation (Tat) system that transports large folded proteins containing a characteristic twin-arginine motif in their signal peptide across membranes. TatA could form the protein-conducting channel of the Tat system. This is Sec-independent protein translocase protein TatA from Xanthomonas axonopodis pv. citri (strain 306).